The chain runs to 88 residues: U2-ctenitoxin-Pn1a (88 aa).

The first 17 residues, 1–17 (MKVAILILSILVLAVAS), serve as a signal peptide directing secretion. Positions 18 to 34 (ETIEEYRDDFAVEELER) are excised as a propeptide. Disulfide bonds link Cys37/Cys51, Cys44/Cys57, Cys48/Cys86, Cys50/Cys71, and Cys59/Cys69. Lys88 is a propeptide.

In terms of tissue distribution, expressed by the venom gland.

The protein resides in the secreted. Inhibits voltage-gated sodium channels (Nav). Causes scratching, lacrimation, hypersalivation, sweating and agitation followed by spastic paralysis of the anterior and posterior extremities and death at dose levels of 1.62 mg/mouse. Insecticidal to the larval and adult forms of the house fly. This Phoneutria nigriventer (Brazilian armed spider) protein is U2-ctenitoxin-Pn1a.